A 558-amino-acid polypeptide reads, in one-letter code: Dihydroxy-acid dehydratase (558 aa).

Cys50 is a binding site for [2Fe-2S] cluster. Asp82 contributes to the Mg(2+) binding site. Cys123 serves as a coordination point for [2Fe-2S] cluster. Residues Asp124 and Lys125 each coordinate Mg(2+). Residue Lys125 is modified to N6-carboxylysine. Residue Cys195 coordinates [2Fe-2S] cluster. Glu447 contacts Mg(2+). Ser472 (proton acceptor) is an active-site residue.

The protein belongs to the IlvD/Edd family. Homodimer. It depends on [2Fe-2S] cluster as a cofactor. The cofactor is Mg(2+).

It carries out the reaction (2R)-2,3-dihydroxy-3-methylbutanoate = 3-methyl-2-oxobutanoate + H2O. The enzyme catalyses (2R,3R)-2,3-dihydroxy-3-methylpentanoate = (S)-3-methyl-2-oxopentanoate + H2O. It functions in the pathway amino-acid biosynthesis; L-isoleucine biosynthesis; L-isoleucine from 2-oxobutanoate: step 3/4. Its pathway is amino-acid biosynthesis; L-valine biosynthesis; L-valine from pyruvate: step 3/4. Its function is as follows. Functions in the biosynthesis of branched-chain amino acids. Catalyzes the dehydration of (2R,3R)-2,3-dihydroxy-3-methylpentanoate (2,3-dihydroxy-3-methylvalerate) into 2-oxo-3-methylpentanoate (2-oxo-3-methylvalerate) and of (2R)-2,3-dihydroxy-3-methylbutanoate (2,3-dihydroxyisovalerate) into 2-oxo-3-methylbutanoate (2-oxoisovalerate), the penultimate precursor to L-isoleucine and L-valine, respectively. This chain is Dihydroxy-acid dehydratase, found in Saccharolobus islandicus (strain Y.N.15.51 / Yellowstone #2) (Sulfolobus islandicus).